Reading from the N-terminus, the 871-residue chain is Protein arg-6, mitochondrial (871 aa).

The transit peptide at M1–S44 directs the protein to the mitochondrion. In terms of domain architecture, N-acetyltransferase spans Q336–L488. C689 is an active-site residue.

The protein in the N-terminal section; belongs to the acetylglutamate kinase family. This sequence in the C-terminal section; belongs to the NAGSA dehydrogenase family. In terms of processing, the protein precursor is cleaved into the two biologically active enzymes, the kinase and the reductase.

It is found in the mitochondrion. The catalysed reaction is N-acetyl-L-glutamate 5-semialdehyde + phosphate + NADP(+) = N-acetyl-L-glutamyl 5-phosphate + NADPH + H(+). The enzyme catalyses N-acetyl-L-glutamate + ATP = N-acetyl-L-glutamyl 5-phosphate + ADP. The protein operates within amino-acid biosynthesis; L-arginine biosynthesis; N(2)-acetyl-L-ornithine from L-glutamate: step 2/4. It functions in the pathway amino-acid biosynthesis; L-arginine biosynthesis; N(2)-acetyl-L-ornithine from L-glutamate: step 3/4. The polypeptide is Protein arg-6, mitochondrial (arg-6) (Neurospora crassa (strain ATCC 24698 / 74-OR23-1A / CBS 708.71 / DSM 1257 / FGSC 987)).